A 273-amino-acid polypeptide reads, in one-letter code: 4-diphosphocytidyl-2-C-methyl-D-erythritol kinase (273 aa).

Residue K9 is part of the active site. An ATP-binding site is contributed by 90–100 (PVAAGLGGGSA). D129 is a catalytic residue.

Belongs to the GHMP kinase family. IspE subfamily.

It carries out the reaction 4-CDP-2-C-methyl-D-erythritol + ATP = 4-CDP-2-C-methyl-D-erythritol 2-phosphate + ADP + H(+). Its pathway is isoprenoid biosynthesis; isopentenyl diphosphate biosynthesis via DXP pathway; isopentenyl diphosphate from 1-deoxy-D-xylulose 5-phosphate: step 3/6. Catalyzes the phosphorylation of the position 2 hydroxy group of 4-diphosphocytidyl-2C-methyl-D-erythritol. This chain is 4-diphosphocytidyl-2-C-methyl-D-erythritol kinase, found in Erythrobacter litoralis (strain HTCC2594).